Reading from the N-terminus, the 337-residue chain is MTLLAKSLEELTDWVKDQGQPAYRGKQLHQWLYEKGVHSLADISVFPQEWRSKMADYPIGRSLIHYRSVAPDRTRKYLLKLADGLIIEAVGIPSEKRLTVCVSSQVGCPMACDFCATGKGGFTRNLKAHEIVDQVLTVQEDFQQRVSHVVFMGMGEPLLNIPEVVTAIHCLNKDVGIGQRCLTISTVGLPHKIKQLAEHNLQITFAVSLHASNQQVRAKLIPSADHYLLSNLIQDCQEYVQITGRRVTFEYILLAGVNDLPEHARELAKLVKGFQSHVNLIPYNPIQEVDYQRPDEKRIKAFKTILEQEKVAVTVRYSRGLATDAACGQLRSSVMVQ.

The active-site Proton acceptor is the Glu88. The 231-residue stretch at 94 to 324 (SEKRLTVCVS…VRYSRGLATD (231 aa)) folds into the Radical SAM core domain. Cys101 and Cys327 are disulfide-bonded. Cys108, Cys112, and Cys115 together coordinate [4Fe-4S] cluster. Residues 155–156 (GE), Ser185, 208–210 (SLH), and Asn284 contribute to the S-adenosyl-L-methionine site. Cys327 acts as the S-methylcysteine intermediate in catalysis.

It belongs to the radical SAM superfamily. RlmN family. [4Fe-4S] cluster serves as cofactor.

The protein resides in the cytoplasm. The enzyme catalyses adenosine(2503) in 23S rRNA + 2 reduced [2Fe-2S]-[ferredoxin] + 2 S-adenosyl-L-methionine = 2-methyladenosine(2503) in 23S rRNA + 5'-deoxyadenosine + L-methionine + 2 oxidized [2Fe-2S]-[ferredoxin] + S-adenosyl-L-homocysteine. It catalyses the reaction adenosine(37) in tRNA + 2 reduced [2Fe-2S]-[ferredoxin] + 2 S-adenosyl-L-methionine = 2-methyladenosine(37) in tRNA + 5'-deoxyadenosine + L-methionine + 2 oxidized [2Fe-2S]-[ferredoxin] + S-adenosyl-L-homocysteine. In terms of biological role, specifically methylates position 2 of adenine 2503 in 23S rRNA and position 2 of adenine 37 in tRNAs. The sequence is that of Probable dual-specificity RNA methyltransferase RlmN from Microcystis aeruginosa (strain NIES-843 / IAM M-2473).